A 452-amino-acid chain; its full sequence is Na(+)/H(+) antiporter NhaA (452 aa).

A run of 11 helical transmembrane segments spans residues 27-47 (FLHIEAMSGVVLLLAAATALI), 78-98 (LHFWVNDVLMTIFFLVAGMEI), 114-134 (ILPIVAAIGGVCIPAIIYLSF), 141-161 (IYGWAVPTATDIAFALGILAL), 172-192 (IILLSLAIIDDIMAVLIIAFF), 201-221 (GLAIAAAGIALVFFFQWISFA), 222-242 (SAWLYVLPGAIIWWGLMVTGI), 316-336 (PWVAYGVMPIFAFANAGVSFA), 346-366 (FLIVLGIIIGLCIGKPLGILA), 388-408 (ILLIGFLAGIGFTMSIFVSML), and 421-441 (IGVLCGSGLSALAGLGYGLIY).

It belongs to the NhaA Na(+)/H(+) (TC 2.A.33) antiporter family.

The protein localises to the cell inner membrane. The catalysed reaction is Na(+)(in) + 2 H(+)(out) = Na(+)(out) + 2 H(+)(in). Functionally, na(+)/H(+) antiporter that extrudes sodium in exchange for external protons. The protein is Na(+)/H(+) antiporter NhaA of Bartonella bacilliformis (strain ATCC 35685 / KC583 / Herrer 020/F12,63).